Here is a 299-residue protein sequence, read N- to C-terminus: MVPVLLALLLLLGPAVSEETQAGNYSLSFLYTGLSKPREGFPSFQAVAYLNDQPFFHYNSEGRRAEPLAPWSQVEGMEDWEKESALQRAREDIFMETLSDIMDYYKDREGSHTFQGAFGCELRNNESSGAFWGYAYDGQDFIKFDKEIPAWVPLDPAAQNTKRKWEAEAVYVQRAKAYLEEECPGMLRRYLPYSRTHLDRQESPSVSVTGHAAPGHKRTLKCLAYDFYPRSIGLHWTRAGDAQEAESGGDVLPSGNGTYQSWVVVGVPPEDQAPYSCHVEHRSLTRPLTVPWDPRQQAE.

An N-terminal signal peptide occupies residues M1 to S17. N-linked (GlcNAc...) asparagine glycosylation is found at N24, N125, and N256. Disulfide bonds link C120-C183 and C222-C277. Positions P204–T289 constitute an Ig-like C1-type domain.

The protein belongs to the MHC class I family. Interacts with PIP.

Its subcellular location is the secreted. In terms of biological role, stimulates lipid degradation in adipocytes and causes the extensive fat losses associated with some advanced cancers. This is Zinc-alpha-2-glycoprotein (AZGP1) from Bos taurus (Bovine).